The following is a 294-amino-acid chain: Nucleotide-binding protein Smlt1108 (294 aa).

Residue 16-23 participates in ATP binding; it reads GLSGSGKS. 69–72 is a binding site for GTP; that stretch reads DVRG.

Belongs to the RapZ-like family.

Displays ATPase and GTPase activities. This is Nucleotide-binding protein Smlt1108 from Stenotrophomonas maltophilia (strain K279a).